We begin with the raw amino-acid sequence, 266 residues long: Glucosamine-6-phosphate deaminase (266 aa).

Asp-72 serves as the catalytic Proton acceptor; for enolization step. Residue Asp-141 is the For ring-opening step of the active site. His-143 functions as the Proton acceptor; for ring-opening step in the catalytic mechanism. The For ring-opening step role is filled by Glu-148.

The protein belongs to the glucosamine/galactosamine-6-phosphate isomerase family. NagB subfamily. Homohexamer.

The catalysed reaction is alpha-D-glucosamine 6-phosphate + H2O = beta-D-fructose 6-phosphate + NH4(+). The protein operates within amino-sugar metabolism; N-acetylneuraminate degradation; D-fructose 6-phosphate from N-acetylneuraminate: step 5/5. Its activity is regulated as follows. Allosterically activated by N-acetylglucosamine 6-phosphate (GlcNAc6P). Its function is as follows. Catalyzes the reversible isomerization-deamination of glucosamine 6-phosphate (GlcN6P) to form fructose 6-phosphate (Fru6P) and ammonium ion. The chain is Glucosamine-6-phosphate deaminase from Aeromonas hydrophila subsp. hydrophila (strain ATCC 7966 / DSM 30187 / BCRC 13018 / CCUG 14551 / JCM 1027 / KCTC 2358 / NCIMB 9240 / NCTC 8049).